The following is a 1067-amino-acid chain: Receptor-type guanylate cyclase gcy-10 (1067 aa).

A signal peptide spans 1 to 20 (MLKSLLIIVIVFLHRELCDG). The Extracellular segment spans residues 21–438 (IQLILFDNWP…CVAKSSCVNY (418 aa)). Residue N411 is glycosylated (N-linked (GlcNAc...) asparagine). Residues 439 to 459 (IPHIIAAVVIVTIIVIAIVII) form a helical membrane-spanning segment. Over 460-1067 (VKQRRHKLNI…RGSIVPLQKA (608 aa)) the chain is Cytoplasmic. The Protein kinase domain occupies 509–791 (ALTSRRRVFG…ESISTVYPLS (283 aa)). ATP contacts are provided by residues 515-523 (RVFGSYALV) and K534. In terms of domain architecture, Guanylate cyclase spans 859 to 989 (TVMFVQICDF…DTVNFASRMQ (131 aa)).

The protein belongs to the adenylyl cyclase class-4/guanylyl cyclase family. As to expression, expressed predominantly in AWC but also in AWB, ASI, ASJ and ASK sensory neurons and in I1 interneuron.

The protein localises to the cell membrane. The protein resides in the cell projection. It localises to the cilium. It catalyses the reaction GTP = 3',5'-cyclic GMP + diphosphate. In terms of biological role, guanylate cyclase involved in the production of the second messenger cGMP. Regulates chemotaxis responses toward volatile odorants in AWC sensory neurons and their avoidance in AWB sensory neurons. May be involved in sensitivity to quinine by regulating egl-4 activity through the production of cGMP. Involved in phototransduction in ASJ neurons downstream of G protein coupled-photoreceptor lite-1. Required to maintain the expression of putative olfactory receptor str-2 in AWC neurons in adults. In AWB and AWC sensory neurons, mediates the recognition of food oders which subsequently allows for the detection of preferred food sources. Involved in AWB sensory neuron development and extension during postembryonic development, potentially via mediating localization of tub-1 and PI(4,5)P2 to membrane cilia. This is Receptor-type guanylate cyclase gcy-10 from Caenorhabditis elegans.